The chain runs to 194 residues: Chitin synthase 2 (194 aa).

It belongs to the chitin synthase family. Class III subfamily.

It localises to the cell membrane. The catalysed reaction is [(1-&gt;4)-N-acetyl-beta-D-glucosaminyl](n) + UDP-N-acetyl-alpha-D-glucosamine = [(1-&gt;4)-N-acetyl-beta-D-glucosaminyl](n+1) + UDP + H(+). Functionally, polymerizes chitin, a structural polymer of the cell wall and septum, by transferring the sugar moiety of UDP-GlcNAc to the non-reducing end of the growing chitin polymer. This chain is Chitin synthase 2 (CHS2), found in Ajellomyces capsulatus (Darling's disease fungus).